A 368-amino-acid chain; its full sequence is Germination protease (368 aa).

Residues 1–16 (MKNNELDVNQFLIRTD) constitute a propeptide that is removed on maturation.

It belongs to the peptidase A25 family. In terms of assembly, homotetramer. Post-translationally, autoproteolytically processed. The inactive tetrameric zymogen termed p46 autoprocesses to a smaller form termed p41, which is active only during spore germination.

It carries out the reaction Endopeptidase action with P4 Glu or Asp, P1 preferably Glu &gt; Asp, P1' hydrophobic and P2' Ala.. Its function is as follows. Initiates the rapid degradation of small, acid-soluble proteins during spore germination. This Bacillus velezensis (strain DSM 23117 / BGSC 10A6 / LMG 26770 / FZB42) (Bacillus amyloliquefaciens subsp. plantarum) protein is Germination protease.